The chain runs to 103 residues: uncharacterized protein (103 aa).

This is an uncharacterized protein from Mycoplasma pneumoniae (strain ATCC 29342 / M129 / Subtype 1) (Mycoplasmoides pneumoniae).